The primary structure comprises 356 residues: Glycerol-1-phosphate dehydrogenase [NAD(P)+] (356 aa).

Residues 103–107 (GRSID) and 125–128 (TAAS) contribute to the NAD(+) site. D130 contributes to the substrate binding site. Position 134 (S134) interacts with NAD(+). D177 serves as a coordination point for substrate. Positions 177 and 257 each coordinate Zn(2+). H261 lines the substrate pocket. A Zn(2+)-binding site is contributed by H273.

This sequence belongs to the glycerol-1-phosphate dehydrogenase family. Zn(2+) serves as cofactor.

The protein localises to the cytoplasm. It carries out the reaction sn-glycerol 1-phosphate + NAD(+) = dihydroxyacetone phosphate + NADH + H(+). The enzyme catalyses sn-glycerol 1-phosphate + NADP(+) = dihydroxyacetone phosphate + NADPH + H(+). Its pathway is membrane lipid metabolism; glycerophospholipid metabolism. Catalyzes the NAD(P)H-dependent reduction of dihydroxyacetonephosphate (DHAP or glycerone phosphate) to glycerol 1-phosphate (G1P). The G1P thus generated is used as the glycerophosphate backbone of phospholipids in the cellular membranes of Archaea. In Methanosarcina barkeri (strain Fusaro / DSM 804), this protein is Glycerol-1-phosphate dehydrogenase [NAD(P)+].